The following is a 70-amino-acid chain: DNA-directed RNA polymerases I, II, and III subunit RPABC4 (70 aa).

4 residues coordinate Zn(2+): Cys31, Cys34, Cys48, and Cys51. The segment at 31–51 (CAECSSKLSLSRTDAVRCKDC) adopts a C4-type zinc-finger fold.

Belongs to the archaeal Rpo12/eukaryotic RPC10 RNA polymerase subunit family. In terms of assembly, component of the RNA polymerase I (Pol I), RNA polymerase II (Pol II) and RNA polymerase III (Pol III) complexes. Component of the RNA polymerase I (Pol I) complex consisting of 14 subunits: RPA135, RPA190, RPC40, RPA14, RPB5, RPO26, RPA43, RPB8, RPA12, RPB10, RPC19, RPC10, RPA49 and RPA34. The complex is composed of a horseshoe-shaped core containing ten subunits (RPA135, RPA190, RPB5, RPO26, RPB8, RPB10, RPC10, RPA12, RPC19 and RPC40) where RPA135 and RPA190 form the DNA-binding cleft. Outside of the core, RPA14 and RPA43 form the stalk that mediates interactions with transcription initiation factors and newly synthesized RNA. Component of the RNA polymerase II (Pol II) complex consisting of 12 subunits: RPO21, RPB2, RPB3, RPB4, RPB5, RPO26, RPB7, RPB8, RPB9, RPB10 and RPC10. Component of the RNA polymerase III (Pol III) complex consisting of 17 subunits. Interacts, via its C-terminus, with TFIIIC subunit TFC4. The N-terminus is blocked.

It localises to the nucleus. The protein resides in the nucleolus. Its subcellular location is the peroxisome. Functionally, DNA-dependent RNA polymerases catalyze the transcription of DNA into RNA using the four ribonucleoside triphosphates as substrates. Common component of RNA polymerases I, II and III which synthesize ribosomal RNA precursors, mRNA precursors and many functional non-coding RNAs, and a small RNAs, such as 5S rRNA and tRNAs, respectively. RNA polymerases are composed of mobile elements that move relative to each other. In Pol II, the core element with the central large cleft comprises RPB3, RBP10, RPB11, RPB12 and regions of RPB1 and RPB2 forming the active center. This is DNA-directed RNA polymerases I, II, and III subunit RPABC4 (RPC10) from Saccharomyces cerevisiae (strain ATCC 204508 / S288c) (Baker's yeast).